Reading from the N-terminus, the 142-residue chain is Transcriptional regulator MraZ (142 aa).

SpoVT-AbrB domains follow at residues 5-51 and 77-120; these read ASAL…PRPE and AADV…DAAT.

This sequence belongs to the MraZ family. In terms of assembly, forms oligomers.

Its subcellular location is the cytoplasm. The protein localises to the nucleoid. This Cupriavidus pinatubonensis (strain JMP 134 / LMG 1197) (Cupriavidus necator (strain JMP 134)) protein is Transcriptional regulator MraZ.